We begin with the raw amino-acid sequence, 699 residues long: Envelope glycoprotein G (699 aa).

The first 22 residues, M1–G22, serve as a signal peptide directing secretion. Over G23–D650 the chain is Virion surface. N104 and N163 each carry an N-linked (GlcNAc...) asparagine; by host glycan. 2 disordered regions span residues P302–P390 and T403–P632. Over residues L323 to A336 the composition is skewed to basic and acidic residues. Over residues E348 to P359 the composition is skewed to polar residues. Composition is skewed to low complexity over residues D376–P390 and T403–P447. A glycan (N-linked (GlcNAc...) asparagine; by host) is linked at N437. Pro residues-rich tracts occupy residues P448–T459 and P467–P482. The segment covering G483–P531 has biased composition (low complexity). N-linked (GlcNAc...) asparagine; by host glycosylation is present at N512. A compositionally biased stretch (pro residues) spans D544–P554. Residues E562–S578 are compositionally biased toward acidic residues. Pro residues predominate over residues P589 to P605. A helical membrane pass occupies residues I651 to A671. The Intravirion segment spans residues A672 to D699.

The protein belongs to the alphaherpesvirinae glycoprotein G family.

It is found in the virion membrane. Chemokine-binding protein that inhibits neutrophils' chemotaxis. The polypeptide is Envelope glycoprotein G (gG) (Human herpesvirus 2 (strain HG52) (HHV-2)).